The following is a 274-amino-acid chain: Large ribosomal subunit protein uL2 (274 aa).

2 disordered regions span residues 28-59 and 222-274; these read APYA…GGHK and GAAM…RRTK. Residues 39-49 are compositionally biased toward polar residues; it reads KSGGRNNNGRI. Over residues 229-239 the composition is skewed to basic and acidic residues; the sequence is DHPHGGGEGRS.

It belongs to the universal ribosomal protein uL2 family. Part of the 50S ribosomal subunit. Forms a bridge to the 30S subunit in the 70S ribosome.

In terms of biological role, one of the primary rRNA binding proteins. Required for association of the 30S and 50S subunits to form the 70S ribosome, for tRNA binding and peptide bond formation. It has been suggested to have peptidyltransferase activity; this is somewhat controversial. Makes several contacts with the 16S rRNA in the 70S ribosome. This Marinomonas sp. (strain MWYL1) protein is Large ribosomal subunit protein uL2.